Here is a 155-residue protein sequence, read N- to C-terminus: MSKITEQVEALIQPVLNDLNFELVDIEYVKEGKDHFLRISIDKEGGVDLNDCTIASEKISEVMDENDPIPEMYYLDVASPGAERPIKKEKDFYNAINQPIFVSLYAPIEGDKEWLGVLKSVNDESINMEVKEKAKTKEIEIPRNKIAKARHAVMI.

The protein belongs to the RimP family.

It is found in the cytoplasm. Its function is as follows. Required for maturation of 30S ribosomal subunits. The protein is Ribosome maturation factor RimP of Staphylococcus epidermidis (strain ATCC 35984 / DSM 28319 / BCRC 17069 / CCUG 31568 / BM 3577 / RP62A).